A 198-amino-acid chain; its full sequence is Cell division protein SepF (198 aa).

The segment at 170-198 is disordered; it reads EVPQPPARPARPASTNPPAWGNETNRMAQ. Over residues 179-188 the composition is skewed to low complexity; that stretch reads ARPASTNPPA.

The protein belongs to the SepF family. Homodimer. Interacts with FtsZ.

The protein localises to the cytoplasm. Cell division protein that is part of the divisome complex and is recruited early to the Z-ring. Probably stimulates Z-ring formation, perhaps through the cross-linking of FtsZ protofilaments. Its function overlaps with FtsA. The protein is Cell division protein SepF of Nostoc sp. (strain PCC 7120 / SAG 25.82 / UTEX 2576).